Reading from the N-terminus, the 241-residue chain is GDSL esterase/lipase At5g45920 (241 aa).

Ser12 acts as the Nucleophile in catalysis. Active-site residues include Asp189 and His192.

Belongs to the 'GDSL' lipolytic enzyme family.

The chain is GDSL esterase/lipase At5g45920 from Arabidopsis thaliana (Mouse-ear cress).